The primary structure comprises 223 residues: Deoxyribose-phosphate aldolase (223 aa).

The active-site Proton donor/acceptor is D91. The Schiff-base intermediate with acetaldehyde role is filled by K153. The Proton donor/acceptor role is filled by K182.

Belongs to the DeoC/FbaB aldolase family. DeoC type 1 subfamily.

It is found in the cytoplasm. The enzyme catalyses 2-deoxy-D-ribose 5-phosphate = D-glyceraldehyde 3-phosphate + acetaldehyde. It participates in carbohydrate degradation; 2-deoxy-D-ribose 1-phosphate degradation; D-glyceraldehyde 3-phosphate and acetaldehyde from 2-deoxy-alpha-D-ribose 1-phosphate: step 2/2. Its function is as follows. Catalyzes a reversible aldol reaction between acetaldehyde and D-glyceraldehyde 3-phosphate to generate 2-deoxy-D-ribose 5-phosphate. This chain is Deoxyribose-phosphate aldolase, found in Yersinia enterocolitica serotype O:8 / biotype 1B (strain NCTC 13174 / 8081).